Consider the following 461-residue polypeptide: Bifunctional protein GlmU (461 aa).

A pyrophosphorylase region spans residues 1-232 (MNLQIIILAA…SFEVQGINNR (232 aa)). UDP-N-acetyl-alpha-D-glucosamine is bound by residues 8–11 (LAAG), lysine 22, glutamine 73, and 78–79 (GT). Aspartate 102 contributes to the Mg(2+) binding site. Positions 142, 157, and 230 each coordinate UDP-N-acetyl-alpha-D-glucosamine. Residue asparagine 230 participates in Mg(2+) binding. A linker region spans residues 233 to 253 (QQLQQLERIWQQRAANQLMEK). The interval 254 to 461 (GATLADANRF…WKRPVKRERD (208 aa)) is N-acetyltransferase. Arginine 336 and lysine 354 together coordinate UDP-N-acetyl-alpha-D-glucosamine. The active-site Proton acceptor is histidine 366. Residues tyrosine 369 and asparagine 380 each contribute to the UDP-N-acetyl-alpha-D-glucosamine site. Acetyl-CoA contacts are provided by residues alanine 383, 389-390 (NY), serine 408, and alanine 426.

This sequence in the N-terminal section; belongs to the N-acetylglucosamine-1-phosphate uridyltransferase family. The protein in the C-terminal section; belongs to the transferase hexapeptide repeat family. As to quaternary structure, homotrimer. It depends on Mg(2+) as a cofactor.

It localises to the cytoplasm. It catalyses the reaction alpha-D-glucosamine 1-phosphate + acetyl-CoA = N-acetyl-alpha-D-glucosamine 1-phosphate + CoA + H(+). The catalysed reaction is N-acetyl-alpha-D-glucosamine 1-phosphate + UTP + H(+) = UDP-N-acetyl-alpha-D-glucosamine + diphosphate. The protein operates within nucleotide-sugar biosynthesis; UDP-N-acetyl-alpha-D-glucosamine biosynthesis; N-acetyl-alpha-D-glucosamine 1-phosphate from alpha-D-glucosamine 6-phosphate (route II): step 2/2. It functions in the pathway nucleotide-sugar biosynthesis; UDP-N-acetyl-alpha-D-glucosamine biosynthesis; UDP-N-acetyl-alpha-D-glucosamine from N-acetyl-alpha-D-glucosamine 1-phosphate: step 1/1. It participates in bacterial outer membrane biogenesis; LPS lipid A biosynthesis. In terms of biological role, catalyzes the last two sequential reactions in the de novo biosynthetic pathway for UDP-N-acetylglucosamine (UDP-GlcNAc). The C-terminal domain catalyzes the transfer of acetyl group from acetyl coenzyme A to glucosamine-1-phosphate (GlcN-1-P) to produce N-acetylglucosamine-1-phosphate (GlcNAc-1-P), which is converted into UDP-GlcNAc by the transfer of uridine 5-monophosphate (from uridine 5-triphosphate), a reaction catalyzed by the N-terminal domain. In Legionella pneumophila subsp. pneumophila (strain Philadelphia 1 / ATCC 33152 / DSM 7513), this protein is Bifunctional protein GlmU.